The sequence spans 100 residues: Small ribosomal subunit protein uS14 (100 aa).

This sequence belongs to the universal ribosomal protein uS14 family. In terms of assembly, part of the 30S ribosomal subunit. Contacts proteins S3 and S10.

Functionally, binds 16S rRNA, required for the assembly of 30S particles and may also be responsible for determining the conformation of the 16S rRNA at the A site. The chain is Small ribosomal subunit protein uS14 from Microcystis aeruginosa (strain NIES-843 / IAM M-2473).